The sequence spans 347 residues: GMP reductase (347 aa).

Alanine 108 to alanine 131 is an NADP(+) binding site. K(+) contacts are provided by glycine 181 and glycine 183. Cysteine 186 serves as the catalytic Thioimidate intermediate. Residue isoleucine 216–valine 239 participates in NADP(+) binding.

The protein belongs to the IMPDH/GMPR family. GuaC type 1 subfamily. In terms of assembly, homotetramer.

It carries out the reaction IMP + NH4(+) + NADP(+) = GMP + NADPH + 2 H(+). Its function is as follows. Catalyzes the irreversible NADPH-dependent deamination of GMP to IMP. It functions in the conversion of nucleobase, nucleoside and nucleotide derivatives of G to A nucleotides, and in maintaining the intracellular balance of A and G nucleotides. This is GMP reductase from Escherichia coli O127:H6 (strain E2348/69 / EPEC).